The primary structure comprises 186 residues: Ribosome-recycling factor (186 aa).

This sequence belongs to the RRF family.

Its subcellular location is the cytoplasm. Functionally, responsible for the release of ribosomes from messenger RNA at the termination of protein biosynthesis. May increase the efficiency of translation by recycling ribosomes from one round of translation to another. The polypeptide is Ribosome-recycling factor (Chlorobium phaeovibrioides (strain DSM 265 / 1930) (Prosthecochloris vibrioformis (strain DSM 265))).